We begin with the raw amino-acid sequence, 185 residues long: UPF0200 protein TON_1344 (185 aa).

An ATP-binding site is contributed by 7 to 14 (GMPGSGKS).

This sequence belongs to the UPF0200 family.

This is UPF0200 protein TON_1344 from Thermococcus onnurineus (strain NA1).